We begin with the raw amino-acid sequence, 455 residues long: uncharacterized protein (455 aa).

This is an uncharacterized protein from Acanthamoeba polyphaga (Amoeba).